The following is a 457-amino-acid chain: 6-phosphofructo-2-kinase/fructose-2,6-bisphosphatase (457 aa).

The tract at residues 1-20 is disordered; that stretch reads MEIPPGLETTKRKVAHSDEH. Residues 1–244 are 6-phosphofructo-2-kinase; the sequence is MEIPPGLETT…VYFLMNIHLL (244 aa). A compositionally biased stretch (basic and acidic residues) spans 9 to 20; the sequence is TTKRKVAHSDEH. 36-44 contributes to the ATP binding site; the sequence is GLPARGKTY. Beta-D-fructose 6-phosphate contacts are provided by R69 and R98. D124 is an active-site residue. The beta-D-fructose 6-phosphate site is built by T126 and R132. C154 is a catalytic residue. 163-168 is an ATP binding site; that stretch reads NVTDVK. Residues K168, R190, and Y194 each contribute to the beta-D-fructose 6-phosphate site. A fructose-2,6-bisphosphatase region spans residues 245–457; that stretch reads PRSIYLTRHG…QLPLCDSPRD (213 aa). Residue R252 participates in beta-D-fructose 2,6-bisphosphate binding. The Tele-phosphohistidine intermediate role is filled by H253. Beta-D-fructose 2,6-bisphosphate contacts are provided by N259 and G265. Catalysis depends on E324, which acts as the Proton donor/acceptor. Beta-D-fructose 2,6-bisphosphate contacts are provided by Y335, R349, K353, Y364, Q390, and R394. An ATP-binding site is contributed by 346 to 349; it reads ADDR. Residues 390–394 and Y426 contribute to the ATP site; that span reads QAVLR.

It in the C-terminal section; belongs to the phosphoglycerate mutase family.

The enzyme catalyses beta-D-fructose 2,6-bisphosphate + H2O = beta-D-fructose 6-phosphate + phosphate. It carries out the reaction beta-D-fructose 6-phosphate + ATP = beta-D-fructose 2,6-bisphosphate + ADP + H(+). In terms of biological role, synthesis and degradation of fructose 2,6-bisphosphate. The chain is 6-phosphofructo-2-kinase/fructose-2,6-bisphosphatase from Caenorhabditis elegans.